Consider the following 71-residue polypeptide: Protein MMP24OS (71 aa).

The segment covering 1-10 has biased composition (gly residues); that stretch reads MGAQLSGGRG. The tract at residues 1-61 is disordered; it reads MGAQLSGGRG…PSPWGPLDDV (61 aa). Over residues 36–55 the composition is skewed to pro residues; sequence HPPQPQPQPQPQPQPEPSPW.

The polypeptide is Protein MMP24OS (Homo sapiens (Human)).